The primary structure comprises 812 residues: ATP-dependent zinc metalloprotease FtsH (812 aa).

The Cytoplasmic segment spans residues 1–21 (MPPSPPRPPKFPGSGRPESPN). A helical membrane pass occupies residues 22-42 (WGVWVMVLLIVGVLAFGFFTP). Residues 43–241 (ESFGLGPRKE…TKFKRESGSW (199 aa)) lie on the Extracellular side of the membrane. Residues 242 to 262 (GGILLNLLPIVLILVILFFMF) traverse the membrane as a helical segment. The Cytoplasmic portion of the chain corresponds to 263–812 (RAQSGGARGA…EFGKDGGEKK (550 aa)). Position 333–340 (333–340 (GAPGTGKT)) interacts with ATP. Residue His555 participates in Zn(2+) binding. Glu556 is a catalytic residue. His559 and Asp631 together coordinate Zn(2+). A disordered region spans residues 739 to 812 (KNPPARVTPP…EFGKDGGEKK (74 aa)). Composition is skewed to basic and acidic residues over residues 757–785 (QPGKDDSGHNEKKEAEETRADGAEERKME) and 803–812 (EFGKDGGEKK).

The protein in the central section; belongs to the AAA ATPase family. It in the C-terminal section; belongs to the peptidase M41 family. As to quaternary structure, homohexamer. Zn(2+) serves as cofactor.

It localises to the cell membrane. Its function is as follows. Acts as a processive, ATP-dependent zinc metallopeptidase for both cytoplasmic and membrane proteins. Plays a role in the quality control of integral membrane proteins. This Akkermansia muciniphila (strain ATCC BAA-835 / DSM 22959 / JCM 33894 / BCRC 81048 / CCUG 64013 / CIP 107961 / Muc) protein is ATP-dependent zinc metalloprotease FtsH.